Reading from the N-terminus, the 200-residue chain is Ephrin-A2 (200 aa).

The N-terminal stretch at methionine 1–aspartate 22 is a signal peptide. The region spanning serine 28–asparagine 161 is the Ephrin RBD domain. A glycan (N-linked (GlcNAc...) asparagine) is linked at asparagine 36. 2 disulfides stabilise this stretch: cysteine 61–cysteine 101 and cysteine 89–cysteine 150. Asparagine 161 and asparagine 175 each carry an N-linked (GlcNAc...) asparagine glycan. Asparagine 175 is lipidated: GPI-anchor amidated asparagine. Positions asparagine 176–serine 200 are cleaved as a propeptide — removed in mature form.

It belongs to the ephrin family. Binds to the receptor tyrosine kinases EPHA3, EPHA4 and EPHA5. Interacts with EPHA8; activates EPHA8. In terms of tissue distribution, expressed in a gradient across the tectum being more strongly expressed at the posterior pole.

The protein localises to the cell membrane. In terms of biological role, cell surface GPI-bound ligand for Eph receptors, a family of receptor tyrosine kinases which are crucial for migration, repulsion and adhesion during neuronal, vascular and epithelial development. Binds promiscuously Eph receptors residing on adjacent cells, leading to contact-dependent bidirectional signaling into neighboring cells. The signaling pathway downstream of the receptor is referred to as forward signaling while the signaling pathway downstream of the ephrin ligand is referred to as reverse signaling. With the EPHA2 receptor may play a role in bone remodeling through regulation of osteoclastogenesis and osteoblastogenesis. This is Ephrin-A2 (EFNA2) from Gallus gallus (Chicken).